A 355-amino-acid chain; its full sequence is Chorismate synthase (355 aa).

Residue Arg48 coordinates NADP(+). FMN contacts are provided by residues 125 to 127 (RSS), 238 to 239 (NA), Gly278, 293 to 297 (KPASS), and Arg319.

The protein belongs to the chorismate synthase family. Homotetramer. The cofactor is FMNH2.

The enzyme catalyses 5-O-(1-carboxyvinyl)-3-phosphoshikimate = chorismate + phosphate. The protein operates within metabolic intermediate biosynthesis; chorismate biosynthesis; chorismate from D-erythrose 4-phosphate and phosphoenolpyruvate: step 7/7. In terms of biological role, catalyzes the anti-1,4-elimination of the C-3 phosphate and the C-6 proR hydrogen from 5-enolpyruvylshikimate-3-phosphate (EPSP) to yield chorismate, which is the branch point compound that serves as the starting substrate for the three terminal pathways of aromatic amino acid biosynthesis. This reaction introduces a second double bond into the aromatic ring system. This is Chorismate synthase from Baumannia cicadellinicola subsp. Homalodisca coagulata.